Consider the following 385-residue polypeptide: 1-deoxy-D-xylulose 5-phosphate reductoisomerase (385 aa).

NADPH-binding residues include Thr-11, Gly-12, Ser-13, Ile-14, Asn-39, and Asn-123. Lys-124 contacts 1-deoxy-D-xylulose 5-phosphate. Residue Glu-125 coordinates NADPH. Mn(2+) is bound at residue Asp-149. 1-deoxy-D-xylulose 5-phosphate is bound by residues Ser-150, Glu-151, Ser-174, and His-197. Glu-151 contacts Mn(2+). Gly-203 is an NADPH binding site. 1-deoxy-D-xylulose 5-phosphate is bound by residues Ser-210, Asn-215, Lys-216, and Glu-219. Residue Glu-219 coordinates Mn(2+).

Belongs to the DXR family. The cofactor is Mg(2+). Requires Mn(2+) as cofactor.

The enzyme catalyses 2-C-methyl-D-erythritol 4-phosphate + NADP(+) = 1-deoxy-D-xylulose 5-phosphate + NADPH + H(+). The protein operates within isoprenoid biosynthesis; isopentenyl diphosphate biosynthesis via DXP pathway; isopentenyl diphosphate from 1-deoxy-D-xylulose 5-phosphate: step 1/6. Its function is as follows. Catalyzes the NADPH-dependent rearrangement and reduction of 1-deoxy-D-xylulose-5-phosphate (DXP) to 2-C-methyl-D-erythritol 4-phosphate (MEP). This chain is 1-deoxy-D-xylulose 5-phosphate reductoisomerase, found in Porphyromonas gingivalis (strain ATCC 33277 / DSM 20709 / CIP 103683 / JCM 12257 / NCTC 11834 / 2561).